The sequence spans 269 residues: DNA-binding protein RFXANK (269 aa).

Residues 1-36 form a disordered region; the sequence is MEPTQVAENLVPNQQPPVPDLEDPEDTRDESPENSD. 5 ANK repeats span residues 88–127, 132–161, 165–194, 198–227, and 231–260; these read LDSL…NLIN, RGFT…DPHI, ERES…DINI, NGGT…DLTT, and SGYT…RLFQ.

Forms homodimers. The RFX heterotetrameric complex consists of 2 molecules of RFX5 and one each of RFXAP and RFX-B/RFXANK; with each subunit representing a separate complementation group. Interacts (via ankyrin repeats) with RFX5 (via PxLPxI/L motif); the interaction is direct. RFX forms cooperative DNA binding complexes with X2BP and CBF/NF-Y. RFX associates with CIITA to form an active transcriptional complex. Interacts with RAF1. Interacts with RFX7. In terms of processing, phosphorylated by RAF1. In terms of tissue distribution, expressed primarily in thymus, lung and testis.

The protein resides in the cytoplasm. The protein localises to the nucleus. Activates transcription from class II MHC promoters. Activation requires the activity of the MHC class II transactivator/CIITA. May regulate other genes in the cell. RFX binds the X1 box of MHC-II promoters. May also potentiate the activation of RAF1. The polypeptide is DNA-binding protein RFXANK (Rfxank) (Mus musculus (Mouse)).